Reading from the N-terminus, the 161-residue chain is 6,7-dimethyl-8-ribityllumazine synthase (161 aa).

5-amino-6-(D-ribitylamino)uracil-binding positions include Trp-31, 63-65 (SFE), and 85-87 (VVI). 90-91 (GT) is a (2S)-2-hydroxy-3-oxobutyl phosphate binding site. Residue His-93 is the Proton donor of the active site. Phe-118 lines the 5-amino-6-(D-ribitylamino)uracil pocket. Arg-132 lines the (2S)-2-hydroxy-3-oxobutyl phosphate pocket.

It belongs to the DMRL synthase family.

It carries out the reaction (2S)-2-hydroxy-3-oxobutyl phosphate + 5-amino-6-(D-ribitylamino)uracil = 6,7-dimethyl-8-(1-D-ribityl)lumazine + phosphate + 2 H2O + H(+). The protein operates within cofactor biosynthesis; riboflavin biosynthesis; riboflavin from 2-hydroxy-3-oxobutyl phosphate and 5-amino-6-(D-ribitylamino)uracil: step 1/2. Catalyzes the formation of 6,7-dimethyl-8-ribityllumazine by condensation of 5-amino-6-(D-ribitylamino)uracil with 3,4-dihydroxy-2-butanone 4-phosphate. This is the penultimate step in the biosynthesis of riboflavin. The chain is 6,7-dimethyl-8-ribityllumazine synthase from Pseudarthrobacter chlorophenolicus (strain ATCC 700700 / DSM 12829 / CIP 107037 / JCM 12360 / KCTC 9906 / NCIMB 13794 / A6) (Arthrobacter chlorophenolicus).